The primary structure comprises 507 residues: MFS transporter fsa7 (507 aa).

The disordered stretch occupies residues 1–65 (MATKDPAVTT…PDDPEHPLNW (65 aa)). Asparagine 64 carries N-linked (GlcNAc...) asparagine glycosylation. The chain crosses the membrane as a helical span at residues 72–92 (LHLVIVSLFTLAANLAATMFA). Asparagine 106 carries N-linked (GlcNAc...) asparagine glycosylation. Helical transmembrane passes span 111 to 131 (AMTV…LAPL), 146 to 166 (FVYI…MFLV), 169 to 189 (IICG…VADL), 200 to 220 (ALFT…GGFV), and 228 to 248 (WTFR…VIFM). Asparagine 252 is a glycosylation site (N-linked (GlcNAc...) asparagine). 6 consecutive transmembrane segments (helical) span residues 302-322 (PIVL…FLLF), 341-361 (GLAY…FSVL), 379-399 (LILM…YGWT), 406-426 (WIVP…VVIP), 429-449 (IYLV…ANLL), and 472-492 (GWGN…PWFF).

This sequence belongs to the major facilitator superfamily.

The protein resides in the cell membrane. Functionally, efflux pump that might be required for efficient secretion of fusarisetin A or other secondary metabolies produced by the fusarisetin A gene cluster. In Fusarium sp. (strain FN080326), this protein is MFS transporter fsa7.